Here is a 343-residue protein sequence, read N- to C-terminus: MRYSVGVLGATGMVGQKFIQMLAEHPWFKLTSLAASERRVGKKYGEEVDWIVSREVPDIAKDIEMVPMDPKHVDADIVFSALPSDIAREVEPKFAEAGFVVASNASAYRMAEDVPLVIPEVNPEHLGLIEVQKKNRGWDGFIVTNPNCTTIVLVLSLKPLMDLGLRTVRVASMQALSGAGYPGVPSLAITDNVIPFIKGEEDKVEEEPLKLLGKFNGRKIEFADIKVSASCHRVPVIDGHTEAVWVEFDREVSVEEAKAAFESLKPLDLPTSPEKVIIVREEPDRPQPRLDRDAGNGMSITVGRIRKDGERGLKYIVLGHNTVRGAAGASILNAELMIKEKII.

11–14 (TGMV) lines the NADP(+) pocket. R109 is a binding site for phosphate. C148 acts as the Acyl-thioester intermediate in catalysis. Q174 provides a ligand contact to substrate. Residue 177–178 (SG) coordinates NADP(+). E200 provides a ligand contact to substrate. K203 is a phosphate binding site. R233 provides a ligand contact to substrate. H240 functions as the Proton acceptor in the catalytic mechanism. 321–322 (NT) contributes to the NADP(+) binding site.

The protein belongs to the aspartate-semialdehyde dehydrogenase family. As to quaternary structure, homodimer.

The enzyme catalyses L-aspartate 4-semialdehyde + phosphate + NADP(+) = 4-phospho-L-aspartate + NADPH + H(+). It participates in amino-acid biosynthesis; L-lysine biosynthesis via DAP pathway; (S)-tetrahydrodipicolinate from L-aspartate: step 2/4. The protein operates within amino-acid biosynthesis; L-methionine biosynthesis via de novo pathway; L-homoserine from L-aspartate: step 2/3. It functions in the pathway amino-acid biosynthesis; L-threonine biosynthesis; L-threonine from L-aspartate: step 2/5. Its function is as follows. Catalyzes the NADPH-dependent formation of L-aspartate-semialdehyde (L-ASA) by the reductive dephosphorylation of L-aspartyl-4-phosphate. This Archaeoglobus fulgidus (strain ATCC 49558 / DSM 4304 / JCM 9628 / NBRC 100126 / VC-16) protein is Aspartate-semialdehyde dehydrogenase.